Consider the following 316-residue polypeptide: Ribosomal RNA small subunit methyltransferase H (316 aa).

S-adenosyl-L-methionine contacts are provided by residues 35-37 (SGH), aspartate 55, phenylalanine 84, aspartate 105, and glutamine 112.

It belongs to the methyltransferase superfamily. RsmH family.

Its subcellular location is the cytoplasm. The enzyme catalyses cytidine(1402) in 16S rRNA + S-adenosyl-L-methionine = N(4)-methylcytidine(1402) in 16S rRNA + S-adenosyl-L-homocysteine + H(+). Its function is as follows. Specifically methylates the N4 position of cytidine in position 1402 (C1402) of 16S rRNA. The sequence is that of Ribosomal RNA small subunit methyltransferase H from Streptococcus equi subsp. zooepidemicus (strain H70).